Here is a 264-residue protein sequence, read N- to C-terminus: 3-methyl-2-oxobutanoate hydroxymethyltransferase (264 aa).

Mg(2+) contacts are provided by Asp-45 and Asp-84. 3-methyl-2-oxobutanoate-binding positions include 45–46, Asp-84, and Lys-113; that span reads DS. Residue Glu-115 coordinates Mg(2+). Glu-182 (proton acceptor) is an active-site residue.

This sequence belongs to the PanB family. As to quaternary structure, homodecamer; pentamer of dimers. Requires Mg(2+) as cofactor.

It localises to the cytoplasm. The catalysed reaction is 3-methyl-2-oxobutanoate + (6R)-5,10-methylene-5,6,7,8-tetrahydrofolate + H2O = 2-dehydropantoate + (6S)-5,6,7,8-tetrahydrofolate. The protein operates within cofactor biosynthesis; (R)-pantothenate biosynthesis; (R)-pantoate from 3-methyl-2-oxobutanoate: step 1/2. Catalyzes the reversible reaction in which hydroxymethyl group from 5,10-methylenetetrahydrofolate is transferred onto alpha-ketoisovalerate to form ketopantoate. The polypeptide is 3-methyl-2-oxobutanoate hydroxymethyltransferase (Caldicellulosiruptor saccharolyticus (strain ATCC 43494 / DSM 8903 / Tp8T 6331)).